The primary structure comprises 395 residues: Elongation factor Tu (395 aa).

A tr-type G domain is found at 10–204; it reads KPHVNIGTIG…VVDEYIPTPV (195 aa). The interval 19–26 is G1; the sequence is GHVDHGKT. 19–26 lines the GTP pocket; that stretch reads GHVDHGKT. Residue Thr26 coordinates Mg(2+). The interval 60-64 is G2; it reads GITIN. The G3 stretch occupies residues 81–84; sequence DAPG. Residues 81–85 and 136–139 each bind GTP; these read DAPGH and NKTD. The segment at 136–139 is G4; it reads NKTD. Residues 174–176 form a G5 region; sequence SAL.

Belongs to the TRAFAC class translation factor GTPase superfamily. Classic translation factor GTPase family. EF-Tu/EF-1A subfamily. As to quaternary structure, monomer.

Its subcellular location is the cytoplasm. It catalyses the reaction GTP + H2O = GDP + phosphate + H(+). Its function is as follows. GTP hydrolase that promotes the GTP-dependent binding of aminoacyl-tRNA to the A-site of ribosomes during protein biosynthesis. This Lactiplantibacillus plantarum (strain ATCC BAA-793 / NCIMB 8826 / WCFS1) (Lactobacillus plantarum) protein is Elongation factor Tu.